Consider the following 493-residue polypeptide: Probable cytosol aminopeptidase (493 aa).

Positions 258 and 263 each coordinate Mn(2+). Residue Lys270 is part of the active site. Mn(2+)-binding residues include Asp281, Asp340, and Glu342. The active site involves Arg344.

Belongs to the peptidase M17 family. Requires Mn(2+) as cofactor.

The protein resides in the cytoplasm. It carries out the reaction Release of an N-terminal amino acid, Xaa-|-Yaa-, in which Xaa is preferably Leu, but may be other amino acids including Pro although not Arg or Lys, and Yaa may be Pro. Amino acid amides and methyl esters are also readily hydrolyzed, but rates on arylamides are exceedingly low.. It catalyses the reaction Release of an N-terminal amino acid, preferentially leucine, but not glutamic or aspartic acids.. In terms of biological role, presumably involved in the processing and regular turnover of intracellular proteins. Catalyzes the removal of unsubstituted N-terminal amino acids from various peptides. This Caulobacter vibrioides (strain ATCC 19089 / CIP 103742 / CB 15) (Caulobacter crescentus) protein is Probable cytosol aminopeptidase.